A 566-amino-acid polypeptide reads, in one-letter code: Erythroid membrane-associated protein (566 aa).

Residues 1-29 (MERPSPCGSWLVGCLFTIAVFQPPVQVLG) form the signal peptide. An Ig-like V-type domain is found at 30-139 (DAGKVYIAPL…SSREDNVTLQ (110 aa)). At 30–246 (DAGKVYIAPL…PERGSLSSPA (217 aa)) the chain is on the extracellular side. An intrachain disulfide couples Cys47 to Cys123. 2 N-linked (GlcNAc...) asparagine glycosylation sites follow: Asn135 and Asn214. The helical transmembrane segment at 247 to 267 (VALSVVLPVLGLLILLGIWLI) threads the bilayer. Residues 268 to 566 (CKQKKSKEKL…ALKGLKVPSL (299 aa)) lie on the Cytoplasmic side of the membrane. Positions 311-509 (KLKRAAANAG…LIICTELQKS (199 aa)) constitute a B30.2/SPRY domain. The residue at position 509 (Ser509) is a Phosphoserine.

Belongs to the immunoglobulin superfamily. BTN/MOG family. Glycosylated. In terms of tissue distribution, expressed in spleen and bone marrow.

It is found in the cell membrane. The protein resides in the cytoplasm. Its function is as follows. Possible role as a cell-adhesion or receptor molecule of erythroid cells. In Mus musculus (Mouse), this protein is Erythroid membrane-associated protein (Ermap).